Reading from the N-terminus, the 381-residue chain is MRVLHFYKTYLSETVGGIEQVIFQLCESSGSWGIDNHVLTLSSDPHPPVVPFGGHVVHRARLDLQLASTGFSLSVFKQFRELAAEADVVNYHFPWPFMDLVHFLTGMNKPSVVTYHSDIIRQRVLLKLYRPLMSRFLHSVDRIVAASPNYFSTSDVLRQYREKTRVITYGLDKDGYPKPATQRLEHWREKLGPRFFLFVGVMRYYKGLHILLDALQGTDYPVVIVGAGPLQAELYAQAAALGLRNVHFLGRVDDEDKVALLQLSYAMVFPSHLRSEAFGISLLEGAMYGKPMISSEIGTGTSYINIHGETGLVVPPSQPAAFRQAMRWLWEHPQQAEEMGRNAEARYRQLFTAEEMGRRWSELYRELLEEKASSRYVKAAR.

Substrate is bound by residues Glu19, His116, Lys206, and Val252.

It belongs to the glycosyltransferase group 1 family. Glycosyltransferase 4 subfamily.

Its subcellular location is the cytoplasm. It catalyses the reaction GDP-alpha-D-rhamnose + N-acetyl-alpha-D-glucosaminyl-di-trans,octa-cis-undecaprenyl diphosphate = alpha-D-rhamnosyl-(1-&gt;3)-N-acetyl-alpha-D-glucosaminyl-1-diphospho-di-trans,octa-cis-undecaprenol + GDP + H(+). The catalysed reaction is GDP-alpha-D-rhamnose + N-acetyl-alpha-D-galactosaminyl-di-trans,octa-cis-undecaprenyl diphosphate = alpha-D-rhamnosyl-(1-&gt;3)-N-acetyl-alpha-D-galactosaminyl-1-diphospho-di-trans,octa-cis-undecaprenol + GDP + H(+). The enzyme catalyses N-acetyl-alpha-D-glucosaminyl-di-trans,octa-cis-undecaprenyl diphosphate + GDP-alpha-D-mannose = alpha-D-mannosyl-(1-&gt;3)-N-acetyl-alpha-D-glucosaminyl-di-trans,octa-cis-undecaprenyl diphosphate + GDP + H(+). It carries out the reaction N-acetyl-alpha-D-galactosaminyl-di-trans,octa-cis-undecaprenyl diphosphate + GDP-alpha-D-mannose = alpha-D-mannosyl-(1-&gt;3)-N-acetyl-alpha-D-galctosaminyl-1-diphospho-di-trans,octa-cis-undecaprenol + GDP + H(+). Its pathway is lipopolysaccharide biosynthesis; LPS oligosaccharide biosynthesis. Its activity is regulated as follows. Not activated by dithiothreitol (DTT) using GlcNAc-alpha-PO(3)-PO(3)-phenylundecyl (GlcNAc-PP-PhU) as acceptor substrate. 0.25% Triton X-100 and 0.125% NP-40 increases the activity 2.5-fold and 2-fold, respectively. 0.125% octyl glucoside has little effect on activity. Slightly increased activity with Mg(2+) and Pb(2+), while no effect with Mn(2+), Co(2+), Ni(2+), Cu(2+), Zn(2+), Ca(2+) or EDTA. Not inhibited by N-butyryl-galactosamine-alpha-benzyl or N-butyryl-glucosamine-beta-benzyl. Bis-imidazolium salts having aliphatic spacer groups with 4 or 6 carbons have little effect on activity, but spacer groups of 18-22 aliphatic carbons inhibit activity, with the most potent inhibitor being bis-imidazolium salt having a 20-carbon chain spacer length. In terms of biological role, non-processive alpha-1,3-D-rhamnosyltransferase. Catalyzes the transfer of one D-rhamnose (D-Rha) residue from donor substrate GDP-D-Rha in alpha-1-3 linkage to both GlcNAc- and GalNAc-diphosphate-lipid acceptor substrates. Is also able to transfer D-mannose (D-Man) to these acceptors at a lower level. Nucleotide sugars GDP-D-Rha, GDP-Fuc, UDP-Gal, UDP-GalNAc, UDP-GlcNAc and CMP-sialic acid cannot act as donor substrates. Only compounds with a diphosphate as the aglycone group can act as acceptor substrates. No activity is detected with compounds containing a diphosphate mimic. Fluorescent undecyl-anthracenyl group-containing compounds, such as GlcNAc-PO(3)-PO(3)-AnthrU and GalNAc-PO(3)-PO(3)-AnthrU, are also good acceptor substrates. Involved in the biosynthesis of the common polysaccharide antigen (CPA), also called A band, which is one of the two major cell surface O-antigens of the P.aeruginosa lipopolysaccharide. Involved in susceptibility to antibiotic colistin. The polypeptide is D-rhamnosyltransferase WbpZ (Pseudomonas aeruginosa (strain ATCC 15692 / DSM 22644 / CIP 104116 / JCM 14847 / LMG 12228 / 1C / PRS 101 / PAO1)).